Reading from the N-terminus, the 172-residue chain is AIG2-like protein C (172 aa).

13–18 (YGSLQE) serves as a coordination point for substrate. Glu-81 serves as the catalytic Proton acceptor.

The protein belongs to the gamma-glutamylcyclotransferase family. Expressed in flowers, leaves, stems and roots.

Functionally, putative gamma-glutamylcyclotransferase. The sequence is that of AIG2-like protein C from Arabidopsis thaliana (Mouse-ear cress).